Consider the following 509-residue polypeptide: Maturase K (509 aa).

The protein belongs to the intron maturase 2 family. MatK subfamily.

It localises to the plastid. The protein localises to the chloroplast. In terms of biological role, usually encoded in the trnK tRNA gene intron. Probably assists in splicing its own and other chloroplast group II introns. This is Maturase K from Banksia cuneata (Quairading banksia).